Consider the following 379-residue polypeptide: MYNIKQSTDTKEAAAIEARRNREKERQNRFFNVRNRVMGVDVQALNNQVGDRKRREAAERSKEAAYGTSQVQYDVVVQMLEKEEADRTRQLAKKVQEFREQKQQLKNGREFSLWDPGQVWKGLPTYLSYSNTYPGPASLQYFSGEDLDRDTRLRMQQGQFRYNLERQQQEQQQAKVDENYTDALSNQLRLAMDAQATHLARLEESCRAAMMCAMANANKAQAAVQAGRQRCERQREQKANLAEIQHQSTSDLLTENPQVAQHPMAPYRVLPYCWKGMTPEQQAAIRKEQEVQRSKKQAHRQAEKTLDTEWKSQTMSSAQAVLELEEQERELCAVFQRGLGSFNQQLANEQKAQQDYLNSVIYTNQPTAQYHQQFNTSSR.

The interval 1–21 is disordered; that stretch reads MYNIKQSTDTKEAAAIEARRN. Over residues 8-21 the composition is skewed to basic and acidic residues; that stretch reads TDTKEAAAIEARRN. 2 coiled-coil regions span residues 82 to 111 and 216 to 304; these read KEEA…GREF and NANK…QAEK.

The protein belongs to the RIB43A family. Microtubule inner protein component of sperm flagellar doublet microtubules.

It is found in the cytoplasm. The protein resides in the cytoskeleton. The protein localises to the flagellum axoneme. This Homo sapiens (Human) protein is RIB43A-like with coiled-coils protein 1 (RIBC1).